A 466-amino-acid chain; its full sequence is ATP synthase subunit beta, sodium ion specific (466 aa).

Residue 153 to 160 participates in ATP binding; it reads GGAGVGKT.

The protein belongs to the ATPase alpha/beta chains family. As to quaternary structure, F-type ATPases have 2 components, CF(1) - the catalytic core - and CF(0) - the membrane proton channel. CF(1) has five subunits: alpha(3), beta(3), gamma(1), delta(1), epsilon(1). CF(0) has three main subunits: a, b and c.

The protein localises to the cell membrane. The enzyme catalyses 4 Na(+)(in) + ATP + H2O = 4 Na(+)(out) + ADP + phosphate + H(+). With respect to regulation, inhibited by nitrate. Its function is as follows. Produces ATP from ADP in the presence of a sodium ion gradient across the membrane. The beta chain is the catalytic subunit. The chain is ATP synthase subunit beta, sodium ion specific from Acetobacterium woodii (strain ATCC 29683 / DSM 1030 / JCM 2381 / KCTC 1655 / WB1).